Reading from the N-terminus, the 247-residue chain is Cell division protein ZapD (247 aa).

It belongs to the ZapD family. Interacts with FtsZ.

The protein resides in the cytoplasm. Cell division factor that enhances FtsZ-ring assembly. Directly interacts with FtsZ and promotes bundling of FtsZ protofilaments, with a reduction in FtsZ GTPase activity. In Shigella dysenteriae serotype 1 (strain Sd197), this protein is Cell division protein ZapD.